The sequence spans 349 residues: MTSSQPYTLTQLGWKPFFQQQLTLEDYENTQICRIVAHHRSGYQLCSEQGRFHLAIHHAQPKMTVGDWVLLDEQQQFKRLLERQSELSRKAAGSKIAEQLIATNVDTLFIVCSLNDDFNLSRIERYLSIAKEAHIEPVVVLTKADLSPQAEQNITQVQQLSATLWVEAVNALDPVSVAALQPWCAKGRTVAFIGSSGVGKSTLTNTLLGEETQQTGGIREDDSKGRHTTTARSVHMIPDGALIIDTPGMRELQLADCSEGVSETFAEIETLAQHCRFKDCQHQQEPGCAVQQAIDNGTLEARRLQNYFKLLREQAYNASTFAEQRNRIKQIGKMYRHVQSDKQKLKTTY.

The 156-residue stretch at 97–252 (AEQLIATNVD…IIDTPGMREL (156 aa)) folds into the CP-type G domain. GTP-binding positions include 142 to 145 (TKAD) and 194 to 202 (GSSGVGKST). Zn(2+) is bound by residues cysteine 275, cysteine 280, histidine 282, and cysteine 288.

The protein belongs to the TRAFAC class YlqF/YawG GTPase family. RsgA subfamily. In terms of assembly, monomer. Associates with 30S ribosomal subunit, binds 16S rRNA. It depends on Zn(2+) as a cofactor.

It localises to the cytoplasm. Its function is as follows. One of several proteins that assist in the late maturation steps of the functional core of the 30S ribosomal subunit. Helps release RbfA from mature subunits. May play a role in the assembly of ribosomal proteins into the subunit. Circularly permuted GTPase that catalyzes slow GTP hydrolysis, GTPase activity is stimulated by the 30S ribosomal subunit. The polypeptide is Small ribosomal subunit biogenesis GTPase RsgA 2 (Vibrio vulnificus (strain CMCP6)).